A 213-amino-acid polypeptide reads, in one-letter code: Protein HSH49 (213 aa).

RRM domains lie at Asn9–Asn88 and Ala108–Lys185.

As to quaternary structure, interacts with RDS3.

It localises to the nucleus. Its function is as follows. Possible SF3b-like factor. In Saccharomyces cerevisiae (strain ATCC 204508 / S288c) (Baker's yeast), this protein is Protein HSH49 (HSH49).